We begin with the raw amino-acid sequence, 168 residues long: Ecotin (168 aa).

The first 21 residues, Met-1–Ala-21, serve as a signal peptide directing secretion. A disulfide bridge links Cys-76 with Cys-113.

This sequence belongs to the protease inhibitor I11 (ecotin) family. In terms of assembly, homodimer.

It localises to the periplasm. General inhibitor of pancreatic serine proteases: inhibits chymotrypsin, trypsin, elastases, factor X, kallikrein as well as a variety of other proteases. The sequence is that of Ecotin from Yersinia enterocolitica serotype O:8 / biotype 1B (strain NCTC 13174 / 8081).